We begin with the raw amino-acid sequence, 732 residues long: MSDTPASTFGGRRAVPPNNSNAAEVDLPTEELQGLVPRGVNLKDYLNVTAVHLFKERWDSNKIDHHTDKYDNNKLIVRRGQTFYIQIDFNRPYDPRKDLFRVEYVIGRYPQENKGTYIPVPVVKELQSGKWGAKVIMNEDRSVRLSVQSSPECIVGKFRMYVAVWTPYGILRTRRDPETDTYILFNPWCEEDAVYLDDEKEREEYVLNDIGVIFYGDFKDIKSRSWSYGQFEDGILDTCLYVMDKAEMDLSGRGNPIKVSRVGSAMVNAKDDEGVLVGSWDNVYAYGIPPSAWTGSVDILLEYRSSETPVRYGQCWVFAGVFNTFLRCLGIPARVITNYFSAHDNDANLQMDIFLEEDGNVSSKLTKDSVWNYHCWNEAWMTRPDLPVGFGGWQAVDSTPQENSDGMYRCGPASVQAVKHGHVCFQFDAPFVFAEVNSDLVYITAKQDGTHVVEAVDATHIGKLIVTKQIGGDGMQDITDTYKFQEGQEEERLALETALMYGAKKTLNTEGVVKSRSDVTMNFDVENAVLGKDFKVTITFQNNSSNLYTILAYLSGNITFYTGVSKKEFKKESFEETLDPFSSKKKEVLVRAGEYMSHLLEQGFLHFFVTARINESRDVLAKQKSIILTIPKITIKVRGAAMVGSDMVVTVEFTNPLKETLQNVWIHLDGPGVMRPKRKVFREIRPNTTVQWEEVCRPWVSGHRKLIASMTSDSLRHVYGELDLQIQRRPTM.

The disordered stretch occupies residues methionine 1–aspartate 26. At serine 2 the chain carries N-acetylserine. A propeptide spans serine 2–arginine 38 (activation peptide). Catalysis depends on residues cysteine 315, histidine 374, and aspartate 397. Asparagine 437, aspartate 439, glutamate 486, and glutamate 491 together coordinate Ca(2+). The N-linked (GlcNAc...) asparagine glycan is linked to asparagine 614.

The protein belongs to the transglutaminase superfamily. Transglutaminase family. Tetramer of two A chains (F13A1) and two B (F13B) chains. It depends on Ca(2+) as a cofactor. In terms of processing, the activation peptide is released by thrombin.

The protein resides in the cytoplasm. Its subcellular location is the secreted. The catalysed reaction is L-glutaminyl-[protein] + L-lysyl-[protein] = [protein]-L-lysyl-N(6)-5-L-glutamyl-[protein] + NH4(+). In terms of biological role, factor XIII is activated by thrombin and calcium ion to a transglutaminase that catalyzes the formation of gamma-glutamyl-epsilon-lysine cross-links between fibrin chains, thus stabilizing the fibrin clot. Also cross-link alpha-2-plasmin inhibitor, or fibronectin, to the alpha chains of fibrin. In Mus musculus (Mouse), this protein is Coagulation factor XIII A chain (F13a1).